A 976-amino-acid polypeptide reads, in one-letter code: Alpha-amylase (976 aa).

The N-terminal stretch at 1–33 (MKRGKLWGRLVSAAGLSLSIFLSSIGNVSTAYA) is a signal peptide. The tract at residues 45–98 (TKENTESATDASSNEASDAEADNDTDEAITDASSKELSAENDGASESDSSFDEY) is disordered. The span at 50–60 (ESATDASSNEA) shows a compositional bias: low complexity. Composition is skewed to acidic residues over residues 61–73 (SDAE…DEAI) and 87–96 (GASESDSSFD). Ca(2+)-binding residues include Asn-243, Thr-284, and Asp-293. Catalysis depends on Asp-323, which acts as the Nucleophile. A Ca(2+)-binding site is contributed by His-327. Glu-375 functions as the Proton donor in the catalytic mechanism.

The protein belongs to the glycosyl hydrolase 13 family. In terms of assembly, monomer. The cofactor is Ca(2+).

It catalyses the reaction Endohydrolysis of (1-&gt;4)-alpha-D-glucosidic linkages in polysaccharides containing three or more (1-&gt;4)-alpha-linked D-glucose units.. The chain is Alpha-amylase (amyA) from Butyrivibrio fibrisolvens.